A 218-amino-acid chain; its full sequence is MDTTGTGQRGASIVVVDYGLGNLRSVTRGLERASADVSIVGDPGALDDADGIVLPGVGAFGDGMENAGPFRDALTDAADEGRPLFGICLGMQMLLSSSEEADHEGQGDARGLDLIPGRNVRFTGTVKVPHMGWNELAVTRDHPLVGGVDGEYAYFVHSYYAAPDDPGHVVAETDYGERFPAVVANDAGNVFGTQFHPEKSGATGLRILRNFVDYCADQ.

The region spanning 12–218 (SIVVVDYGLG…RNFVDYCADQ (207 aa)) is the Glutamine amidotransferase type-1 domain. Catalysis depends on Cys-88, which acts as the Nucleophile. Catalysis depends on residues His-196 and Glu-198.

Heterodimer of HisH and HisF.

It localises to the cytoplasm. It catalyses the reaction 5-[(5-phospho-1-deoxy-D-ribulos-1-ylimino)methylamino]-1-(5-phospho-beta-D-ribosyl)imidazole-4-carboxamide + L-glutamine = D-erythro-1-(imidazol-4-yl)glycerol 3-phosphate + 5-amino-1-(5-phospho-beta-D-ribosyl)imidazole-4-carboxamide + L-glutamate + H(+). The enzyme catalyses L-glutamine + H2O = L-glutamate + NH4(+). It participates in amino-acid biosynthesis; L-histidine biosynthesis; L-histidine from 5-phospho-alpha-D-ribose 1-diphosphate: step 5/9. IGPS catalyzes the conversion of PRFAR and glutamine to IGP, AICAR and glutamate. The HisH subunit catalyzes the hydrolysis of glutamine to glutamate and ammonia as part of the synthesis of IGP and AICAR. The resulting ammonia molecule is channeled to the active site of HisF. The sequence is that of Imidazole glycerol phosphate synthase subunit HisH from Halobacterium salinarum (strain ATCC 700922 / JCM 11081 / NRC-1) (Halobacterium halobium).